Reading from the N-terminus, the 221-residue chain is 2-amino-5-formylamino-6-ribosylaminopyrimidin-4(3H)-one 5'-monophosphate deformylase (221 aa).

Fe cation contacts are provided by glutamate 29, histidine 31, aspartate 40, and histidine 108.

Belongs to the creatininase superfamily. FAPy deformylase family. Homodimer. The cofactor is Fe(2+). Zn(2+) serves as cofactor.

The enzyme catalyses 2-amino-5-formylamino-6-(5-phospho-D-ribosylamino)pyrimidin-4(3H)-one + H2O = 2,5-diamino-6-(1-D-ribosylamino)pyrimidin-4(3H)-one 5'-phosphate + formate + H(+). It participates in cofactor biosynthesis; coenzyme F420 biosynthesis. Its pathway is cofactor biosynthesis; riboflavin biosynthesis. Functionally, catalyzes the hydrolysis of the formamide of 2-amino-5-formylamino-6-ribosylamino-4(3H)-pyrimidinone 5'-monophosphate (FAPy) to form 2,5-diamino-6-ribosylamino-4(3H)-pyrimidinone 5'-phosphate (APy). This is 2-amino-5-formylamino-6-ribosylaminopyrimidin-4(3H)-one 5'-monophosphate deformylase from Methanococcus maripaludis (strain C5 / ATCC BAA-1333).